The sequence spans 652 residues: Phosphatidylinositol-binding clathrin assembly protein (652 aa).

At serine 2 the chain carries N-acetylserine. In terms of domain architecture, ENTH spans 14 to 145 (QHSVTGSAVS…VSYRQVAFDF (132 aa)). Serine 16 and serine 20 each carry phosphoserine. The interval 221–294 (KYFDMKKNQC…LEGKKIKDST (74 aa)) is interaction with PIMREG. Lysine 238 participates in a covalent cross-link: Glycyl lysine isopeptide (Lys-Gly) (interchain with G-Cter in SUMO2). Phosphoserine occurs at positions 303 and 315. A disordered region spans residues 559–580 (KNDVNWSQPGEKKLTGGSNWQP).

The protein belongs to the PICALM/SNAP91 family. In terms of assembly, binds to clathrin; involves primarily the C-terminal sequences, but the full-length protein is required for full binding capacity. Binds phosphatidylinositol 4,5- bisphosphate. Interacts with PIMREG; this interaction may change the subcellular location into the nucleus. Interacts with AP2A1 (via its alpha-appendage domain). Interacts (via N-terminus) with VAMP2; VAMP3; VAMP7 and VAMP8 (Via N-terminus). Interacts with LC3/MAP1LC3A. As to expression, expressed in all tissues examined.

Its subcellular location is the cell membrane. The protein resides in the membrane. It localises to the clathrin-coated pit. The protein localises to the golgi apparatus. It is found in the cytoplasmic vesicle. Its subcellular location is the clathrin-coated vesicle. The protein resides in the nucleus. Its function is as follows. Cytoplasmic adapter protein that plays a critical role in clathrin-mediated endocytosis which is important in processes such as internalization of cell receptors, synaptic transmission or removal of apoptotic cells. Recruits AP-2 and attaches clathrin triskelions to the cytoplasmic side of plasma membrane leading to clathrin-coated vesicles (CCVs) assembly. Furthermore, regulates clathrin-coated vesicle size and maturation by directly sensing and driving membrane curvature. In addition to binding to clathrin, mediates the endocytosis of small R-SNARES (Soluble NSF Attachment Protein REceptors) between plasma membranes and endosomes including VAMP2, VAMP3, VAMP4, VAMP7 or VAMP8. In turn, PICALM-dependent SNARE endocytosis is required for the formation and maturation of autophagic precursors. Modulates thereby autophagy and the turnover of autophagy substrates such as MAPT/TAU or amyloid precursor protein cleaved C-terminal fragment (APP-CTF). This Homo sapiens (Human) protein is Phosphatidylinositol-binding clathrin assembly protein (PICALM).